Consider the following 241-residue polypeptide: Homeobox protein TGIF2LX (241 aa).

2 disordered regions span residues 1–58 (MEAA…GNLP) and 127–207 (GKGA…ELVS). A compositionally biased stretch (polar residues) spans 10 to 39 (ETQSPVQKDSPAKTQSPAQDTSIMSRNNAD). A DNA-binding region (homeobox; TALE-type) is located at residues 48–111 (EHKKKRKGNL…INARRRILPD (64 aa)).

This sequence belongs to the TALE/TGIF homeobox family.

It is found in the nucleus. Functionally, may have a transcription role in testis. This Pan paniscus (Pygmy chimpanzee) protein is Homeobox protein TGIF2LX (TGIF2LX).